We begin with the raw amino-acid sequence, 341 residues long: Tyrosine recombinase XerC (341 aa).

In terms of domain architecture, Core-binding (CB) spans P14–D105. The Tyr recombinase domain maps to P126–E309. Catalysis depends on residues R169, K193, H261, R264, and H287. Y296 (O-(3'-phospho-DNA)-tyrosine intermediate) is an active-site residue.

Belongs to the 'phage' integrase family. XerC subfamily. Forms a cyclic heterotetrameric complex composed of two molecules of XerC and two molecules of XerD.

The protein localises to the cytoplasm. In terms of biological role, site-specific tyrosine recombinase, which acts by catalyzing the cutting and rejoining of the recombining DNA molecules. The XerC-XerD complex is essential to convert dimers of the bacterial chromosome into monomers to permit their segregation at cell division. It also contributes to the segregational stability of plasmids. The chain is Tyrosine recombinase XerC from Rhodospirillum centenum (strain ATCC 51521 / SW).